Reading from the N-terminus, the 138-residue chain is Histone H2B.8 (138 aa).

Over residues 1–38 (MAPKAAEKKPAGKKPAEKAPAEKLPKAEKKITKEGGSE) the composition is skewed to basic and acidic residues. Residues 1–45 (MAPKAAEKKPAGKKPAEKAPAEKLPKAEKKITKEGGSEKKKKKSK) form a disordered region. A N,N,N-trimethylalanine; alternate modification is found at Ala-2. At Ala-2 the chain carries N,N-dimethylalanine; alternate. An N-methylalanine; alternate modification is found at Ala-2. Lys-4 bears the N6-methyllysine mark. An N6-acetyllysine mark is found at Lys-8 and Lys-13. Lys-14 carries the post-translational modification N6,N6-dimethyllysine. N6-acetyllysine is present on residues Lys-18, Lys-23, Lys-29, and Lys-30. Residue Lys-134 forms a Glycyl lysine isopeptide (Lys-Gly) (interchain with G-Cter in ubiquitin) linkage.

Belongs to the histone H2B family. In terms of assembly, the nucleosome is a histone octamer containing two molecules each of H2A, H2B, H3 and H4 assembled in one H3-H4 heterotetramer and two H2A-H2B heterodimers. The octamer wraps approximately 147 bp of DNA. Can be acetylated to form H2BK6ac, H2BK33ac and H2BK34ac. In terms of processing, monoubiquitinated by BRE1 to form H2BK143ub1 and deubiquitinated by UBP26. Required for heterochromatic histone H3 di- and trimethylation at H3K4me. May give a specific tag for epigenetic transcriptional activation.

It localises to the nucleus. The protein resides in the chromosome. Its function is as follows. Core component of nucleosome. Nucleosomes wrap and compact DNA into chromatin, limiting DNA accessibility to the cellular machineries which require DNA as a template. Histones thereby play a central role in transcription regulation, DNA repair, DNA replication and chromosomal stability. DNA accessibility is regulated via a complex set of post-translational modifications of histones, also called histone code, and nucleosome remodeling. The sequence is that of Histone H2B.8 from Arabidopsis thaliana (Mouse-ear cress).